We begin with the raw amino-acid sequence, 116 residues long: Large ribosomal subunit protein bL19 (116 aa).

The protein belongs to the bacterial ribosomal protein bL19 family.

Its function is as follows. This protein is located at the 30S-50S ribosomal subunit interface and may play a role in the structure and function of the aminoacyl-tRNA binding site. This chain is Large ribosomal subunit protein bL19, found in Pseudomonas entomophila (strain L48).